We begin with the raw amino-acid sequence, 325 residues long: Replication factor C small subunit (325 aa).

An ATP-binding site is contributed by 54 to 61 (GPAGTGKT).

The protein belongs to the activator 1 small subunits family. RfcS subfamily. Heteromultimer composed of small subunits (RfcS) and large subunits (RfcL).

Part of the RFC clamp loader complex which loads the PCNA sliding clamp onto DNA. The protein is Replication factor C small subunit of Haloarcula marismortui (strain ATCC 43049 / DSM 3752 / JCM 8966 / VKM B-1809) (Halobacterium marismortui).